Here is a 279-residue protein sequence, read N- to C-terminus: Large ribosomal subunit protein uL2 (279 aa).

The segment at 223–279 is disordered; it reads VVMNPVDHPHGGGEGRTSGGRHPVSPWGQPTKGYKTRRSARPSDKFIVQKRKRNRNR. Residues 270–279 are compositionally biased toward basic residues; it reads VQKRKRNRNR.

This sequence belongs to the universal ribosomal protein uL2 family. As to quaternary structure, part of the 50S ribosomal subunit. Forms a bridge to the 30S subunit in the 70S ribosome.

In terms of biological role, one of the primary rRNA binding proteins. Required for association of the 30S and 50S subunits to form the 70S ribosome, for tRNA binding and peptide bond formation. It has been suggested to have peptidyltransferase activity; this is somewhat controversial. Makes several contacts with the 16S rRNA in the 70S ribosome. This is Large ribosomal subunit protein uL2 from Leptospira borgpetersenii serovar Hardjo-bovis (strain JB197).